The chain runs to 385 residues: 6-hydroxynicotinate 3-monooxygenase (385 aa).

An N-terminal signal peptide occupies residues 1–20 (MSQSPRIAVVGAGLGGAAAA). Residues Gly15, 34 to 35 (EQ), His47, Arg108, and Leu130 contribute to the FAD site. The active-site Proton acceptor is His47. Tyr215 (proton acceptor) is an active-site residue. FAD is bound by residues Asp294 and 307–308 (AA).

This sequence belongs to the 6-hydroxynicotinate 3-monooxygenase family. In terms of assembly, monomer. Requires FAD as cofactor.

The catalysed reaction is 6-hydroxynicotinate + NADH + O2 + 2 H(+) = 2,5-dihydroxypyridine + CO2 + NAD(+) + H2O. With respect to regulation, inhibited competitively by nicotinic acid with a Ki of 0.49 mM. Inhibited by thiol-specific compounds p-chloromercuribenzoate, DTNB, Ag(2)SO(4), HgCl(2), CuCl(2) and N-ethylmaleimide. No inhibition by o-phenanthroline, 8-hydroxyquinoline, EDTA, disodium 4,5-dihydroxy-m-benzenedisulfonate, fluoride, azide, KCl, LiCl, NaCl, BaCl(2), MnCl(2), MgCl(2), PBCl, ZnCl(2), CoCl(2), SnCl(2), FeSO(4), FeCl(3), NiCl(2), CdCl(2), AlCl(3), iodoacetic acid, hydro-xylamine, phenylhydrazine, semicarbazide, cysteamine, alpha,alpha-dipyridyl and urea. In terms of biological role, flavin-dependent monooxygenase (FMO) that catalyzes the decarboxylative hydroxylation of 6-hydroxynicotinic acid (6-HNA) to 2,5-dihydroxypyridine (2,5-DHP) with concomitant oxidation of NADH, a step in the aerobic nicotinate degradation pathway. Uses NADH in preference to NADPH as an electron donor. The protein is 6-hydroxynicotinate 3-monooxygenase (nicC) of Pseudomonas fluorescens.